Here is a 318-residue protein sequence, read N- to C-terminus: Formimidoylglutamase (318 aa).

The Mn(2+) site is built by H130, D155, H157, D159, D246, and D248.

It belongs to the arginase family. Requires Mn(2+) as cofactor.

The enzyme catalyses N-formimidoyl-L-glutamate + H2O = formamide + L-glutamate. It functions in the pathway amino-acid degradation; L-histidine degradation into L-glutamate; L-glutamate from N-formimidoyl-L-glutamate (hydrolase route): step 1/1. Functionally, catalyzes the conversion of N-formimidoyl-L-glutamate to L-glutamate and formamide. The polypeptide is Formimidoylglutamase (Klebsiella pneumoniae subsp. pneumoniae (strain ATCC 700721 / MGH 78578)).